The following is a 73-amino-acid chain: Large ribosomal subunit protein bL27c (73 aa).

The protein belongs to the bacterial ribosomal protein bL27 family.

Its subcellular location is the plastid. It localises to the chloroplast. The sequence is that of Large ribosomal subunit protein bL27c (rpl27) from Chrysochromulina alifera (Plankton alga).